A 303-amino-acid polypeptide reads, in one-letter code: Probable 5-dehydro-4-deoxyglucarate dehydratase (303 aa).

This sequence belongs to the DapA family.

The catalysed reaction is 5-dehydro-4-deoxy-D-glucarate + H(+) = 2,5-dioxopentanoate + CO2 + H2O. It functions in the pathway carbohydrate acid metabolism; D-glucarate degradation; 2,5-dioxopentanoate from D-glucarate: step 2/2. In Variovorax paradoxus (strain S110), this protein is Probable 5-dehydro-4-deoxyglucarate dehydratase.